A 199-amino-acid chain; its full sequence is MAEEQVLNTHNASLLLSAANKSHYPEDDIPEIALAGRSNVGKSSFINTLLGRKNLARTSGKPGKTQLLNFFNIDDKIRFVDVPGYGYAKVSKVERARWGKMIEEYLTSRDNLRAVVSLVDLRHEPSTEDVQMYEFLKYYEIPVIVVATKADKIPRGKWNKHESMIKKKLNFEQEDAFILFSSVDRIGIDQAWDAILEQI.

Positions 28-199 constitute an EngB-type G domain; it reads DIPEIALAGR…QAWDAILEQI (172 aa). GTP is bound by residues 36–43, 63–67, 81–84, 148–151, and 180–182; these read GRSNVGKS, GKTQL, DVPG, TKAD, and FSS. Residues serine 43 and threonine 65 each coordinate Mg(2+).

Belongs to the TRAFAC class TrmE-Era-EngA-EngB-Septin-like GTPase superfamily. EngB GTPase family. The cofactor is Mg(2+).

Its function is as follows. Necessary for normal cell division and for the maintenance of normal septation. The polypeptide is Probable GTP-binding protein EngB (Streptococcus uberis (strain ATCC BAA-854 / 0140J)).